A 368-amino-acid polypeptide reads, in one-letter code: Phospho-N-acetylmuramoyl-pentapeptide-transferase (368 aa).

10 helical membrane-spanning segments follow: residues 34-54 (GAVV…IDHL), 79-99 (TPTM…VLWA), 102-122 (LNPY…VGFY), 140-160 (ARLL…VRLG), 176-196 (LVIK…VGAG), 207-227 (GLAI…AYLA), 247-267 (LAVL…FNAP), 271-291 (IFMG…IAVA), 296-316 (IVLA…IVQV), and 345-365 (QIVI…LSTL).

This sequence belongs to the glycosyltransferase 4 family. MraY subfamily. Mg(2+) serves as cofactor.

The protein localises to the cell inner membrane. It carries out the reaction UDP-N-acetyl-alpha-D-muramoyl-L-alanyl-gamma-D-glutamyl-meso-2,6-diaminopimeloyl-D-alanyl-D-alanine + di-trans,octa-cis-undecaprenyl phosphate = di-trans,octa-cis-undecaprenyl diphospho-N-acetyl-alpha-D-muramoyl-L-alanyl-D-glutamyl-meso-2,6-diaminopimeloyl-D-alanyl-D-alanine + UMP. Its pathway is cell wall biogenesis; peptidoglycan biosynthesis. Its function is as follows. Catalyzes the initial step of the lipid cycle reactions in the biosynthesis of the cell wall peptidoglycan: transfers peptidoglycan precursor phospho-MurNAc-pentapeptide from UDP-MurNAc-pentapeptide onto the lipid carrier undecaprenyl phosphate, yielding undecaprenyl-pyrophosphoryl-MurNAc-pentapeptide, known as lipid I. The protein is Phospho-N-acetylmuramoyl-pentapeptide-transferase of Bradyrhizobium sp. (strain ORS 278).